Reading from the N-terminus, the 273-residue chain is MNRIAIGLHYDGAAFSGWQSQPHRNTVQDYLEDSIERFAGVRLLTTVAGRTDAGVHALGQVIHLDTTLDRTTFSWVRGINAFLPPSIALQWARPVDESFHARFLAFERMYYYALYTGPHRVPLAHGRAGYLMLPPGQRLDVDAMQAASRCLLGEQDFSSFRAAECQAKSPVKTMYDVTLKADGNWVFLRFRASAFLHHMVRNLMGCLVAVGRGRYPPEWLAEVLAARDRKLAAPTFMPDGLYLADVKYPEAYKIPAADPSASLFHGVFRHDAA.

Catalysis depends on Asp-52, which acts as the Nucleophile. Tyr-110 is a substrate binding site.

This sequence belongs to the tRNA pseudouridine synthase TruA family. In terms of assembly, homodimer.

It carries out the reaction uridine(38/39/40) in tRNA = pseudouridine(38/39/40) in tRNA. Formation of pseudouridine at positions 38, 39 and 40 in the anticodon stem and loop of transfer RNAs. The sequence is that of tRNA pseudouridine synthase A from Cupriavidus pinatubonensis (strain JMP 134 / LMG 1197) (Cupriavidus necator (strain JMP 134)).